A 289-amino-acid chain; its full sequence is Rhodopsin (289 aa).

Over 1–7 (YLVSPAA) the chain is Extracellular. The chain crosses the membrane as a helical span at residues 8-32 (YAALGAYMFLLILIGFPVNFLTLYV). The Cytoplasmic portion of the chain corresponds to 33–44 (TLEHKKLRTPLN). The chain crosses the membrane as a helical span at residues 45–67 (YILLNLAVADLFMVLGGFTTTMY). Residues 68–81 (TSMHGYFVLGRLGC) are Extracellular-facing. An intrachain disulfide couples Cys-81 to Cys-158. A helical membrane pass occupies residues 82–104 (NLEGFFATLGGEIALWSLVVLAI). A 'Ionic lock' involved in activated form stabilization motif is present at residues 105 to 107 (ERW). At 105–123 (ERWIVVCKPISNFRFTEDN) the chain is on the cytoplasmic side. A helical membrane pass occupies residues 124–144 (AIMGLAFSWVMALTCAVPPLV). Residues 145–173 (GWSRYIPEGMQCSCGVDYYTRAEGFNNES) are Extracellular-facing. An N-linked (GlcNAc...) asparagine glycan is attached at Asn-171. The helical transmembrane segment at 174–195 (FVIYMFIVHFPIPLSVIFFCYG) threads the bilayer. Over 196-223 (RLLCAVKEAAAAQQESETTQRAEKEVSR) the chain is Cytoplasmic. Residues 224–245 (MVVILVIGFLVCWLPYASVAWW) form a helical membrane-spanning segment. Topologically, residues 246 to 257 (IFCNQGSDFGPI) are extracellular. The helical transmembrane segment at 258 to 279 (FMTLPSFFAKRPAIYNPMIYIC) threads the bilayer. Lys-267 carries the N6-(retinylidene)lysine modification. The Cytoplasmic portion of the chain corresponds to 280–289 (MNKQFRHCMI).

Belongs to the G-protein coupled receptor 1 family. Opsin subfamily. Phosphorylated on some or all of the serine and threonine residues present in the C-terminal region. In terms of processing, contains one covalently linked retinal chromophore.

Its subcellular location is the membrane. The protein localises to the cell projection. It localises to the cilium. The protein resides in the photoreceptor outer segment. Photoreceptor required for image-forming vision at low light intensity. While most salt water fish species use retinal as chromophore, most freshwater fish use 3-dehydroretinal, or a mixture of retinal and 3-dehydroretinal. Light-induced isomerization of 11-cis to all-trans retinal triggers a conformational change that activates signaling via G-proteins. Subsequent receptor phosphorylation mediates displacement of the bound G-protein alpha subunit by arrestin and terminates signaling. This is Rhodopsin (rho) from Batrachocottus multiradiatus (Baikal sculpin).